The primary structure comprises 192 residues: Glycerol-3-phosphate acyltransferase (192 aa).

The next 5 membrane-spanning stretches (helical) occupy residues 1 to 21 (MFIAILMGAYLLGSIPFAYIL), 49 to 69 (GLAGLVLLLDIAKSAVLIYSL), 80 to 100 (ELCIVGLLSVLGHIYPIWLKF), 110 to 130 (IGVIIPLNPLMLCVFFISWLF), and 143 to 163 (IVSIIATMIVCYLTESGVVAL).

Belongs to the PlsY family. As to quaternary structure, probably interacts with PlsX.

It localises to the cell inner membrane. The catalysed reaction is an acyl phosphate + sn-glycerol 3-phosphate = a 1-acyl-sn-glycero-3-phosphate + phosphate. Its pathway is lipid metabolism; phospholipid metabolism. In terms of biological role, catalyzes the transfer of an acyl group from acyl-phosphate (acyl-PO(4)) to glycerol-3-phosphate (G3P) to form lysophosphatidic acid (LPA). This enzyme utilizes acyl-phosphate as fatty acyl donor, but not acyl-CoA or acyl-ACP. The protein is Glycerol-3-phosphate acyltransferase of Anaplasma phagocytophilum (strain HZ).